The primary structure comprises 451 residues: Crh-like protein 2 (451 aa).

A signal peptide spans 1 to 21 (MQFNSLVLLAGATILSPFVQA). Residues 22-241 (QTWTTCNPLN…FTKVPFTMYV (220 aa)) form the GH16 domain. Cysteines 27 and 34 form a disulfide. 4 N-linked (GlcNAc...) asparagine glycosylation sites follow: Asn-31, Asn-43, Asn-49, and Asn-59. Glu-121 acts as the Nucleophile in catalysis. Catalysis depends on Glu-125, which acts as the Proton donor. Glu-125 is a binding site for chitin. N-linked (GlcNAc...) asparagine glycosylation is found at Asn-130, Asn-143, and Asn-165. Residues Arg-206, Trp-210, and Thr-222 each coordinate chitin. N-linked (GlcNAc...) asparagine glycosylation occurs at Asn-273. Residues 305-325 (VYCGGGAAVAALVSAFLFTFL) traverse the membrane as a helical segment. The N-linked (GlcNAc...) asparagine glycan is linked to Asn-366.

This sequence belongs to the glycosyl hydrolase 16 family. CRH1 subfamily. Forms homodimers as well as heterodimers with other crh protein members crh1 and crh3. Dimerization may be necessary for the transglycosylation activity.

The protein resides in the membrane. It carries out the reaction Random endo-hydrolysis of N-acetyl-beta-D-glucosaminide (1-&gt;4)-beta-linkages in chitin and chitodextrins.. In terms of biological role, dual chitinase/transglycosylase that plays a role in cell wall architecture. Chitinase and transglycosylase activities are coupled. Required for the polysaccharide cross-linking at the septa and the cell wall. More specifically, transfers chitin to 1,6-beta-glucan in the cell wall. The chain is Crh-like protein 2 from Botryotinia fuckeliana (strain B05.10) (Noble rot fungus).